Here is a 110-residue protein sequence, read N- to C-terminus: ATP-dependent Clp protease adapter protein ClpS (110 aa).

Belongs to the ClpS family. As to quaternary structure, binds to the N-terminal domain of the chaperone ClpA.

Functionally, involved in the modulation of the specificity of the ClpAP-mediated ATP-dependent protein degradation. This Bartonella quintana (strain Toulouse) (Rochalimaea quintana) protein is ATP-dependent Clp protease adapter protein ClpS.